The sequence spans 314 residues: 3'-5' exoribonuclease YhaM (314 aa).

Positions His-163 to Lys-279 constitute an HD domain.

This sequence belongs to the YhaM family.

In terms of biological role, shows a 3'-5' exoribonuclease activity. This chain is 3'-5' exoribonuclease YhaM, found in Bacillus cereus (strain AH820).